Consider the following 449-residue polypeptide: Capsid protein (449 aa).

The interval 1-43 is DNA-binding; it reads MARRARRPRGRFYSFRRGRWHHLKRLRRRYKFRHRRRQRYRRR. The tract at residues 6–47 is nuclear localization signals; the sequence is RRPRGRFYSFRRGRWHHLKRLRRRYKFRHRRRQRYRRRAFRK.

It belongs to the gyrovirus capsid protein family. Homomultimer (Potential). Interacts with Rep; this interaction relocates Rep into the nucleus.

The protein resides in the host nucleus. The protein localises to the virion. Functionally, self-assembles to form the virion icosahedral capsid with a T=1 symmetry. This very small capsid (25 nm in diameter) allows the virus to be very stable in the environment and resistant to some disinfectants, including detergents. Essential for the initial attachment to host receptors. After attachment, the virus is endocytosed and traffics to the nucleus. The capsid protein binds and transports the viral genome and Rep across the nuclear envelope. In Gallus gallus (Chicken), this protein is Capsid protein (VP1).